A 360-amino-acid polypeptide reads, in one-letter code: Hereditary hemochromatosis protein homolog (360 aa).

The first 25 residues, 1–25 (MDRSAGLPVRLLLLLLLLLLWSVAP), serve as a signal peptide directing secretion. Residues 26–127 (QALRPGSHSL…KVTKLRVVPE (102 aa)) are alpha-1. Residues 26–319 (QALRPGSHSL…WEPSRSQDMI (294 aa)) are Extracellular-facing. Asn-115, Asn-143, Asn-167, and Asn-247 each carry an N-linked (GlcNAc...) asparagine glycan. Residues 128 to 218 (SHILQVILGC…ELQRGVLGQQ (91 aa)) are alpha-2. 2 disulfide bridges follow: Cys-137/Cys-200 and Cys-238/Cys-295. Positions 219-310 (VPTLVKVTRH…GLDQPLTATW (92 aa)) are alpha-3. Positions 220-309 (PTLVKVTRHW…PGLDQPLTAT (90 aa)) constitute an Ig-like C1-type domain. The interval 311-319 (EPSRSQDMI) is connecting peptide. The helical transmembrane segment at 320-340 (IGIISGITICAIFFVGILILV) threads the bilayer. The Cytoplasmic segment spans residues 341–360 (LRKRKVSGGTMGDYVLTECE).

Belongs to the MHC class I family. In terms of assembly, binds TFR through the extracellular domain in a pH-dependent manner.

The protein localises to the cell membrane. Functionally, binds to transferrin receptor (TFR) and reduces its affinity for iron-loaded transferrin. The chain is Hereditary hemochromatosis protein homolog (Hfe) from Rattus norvegicus (Rat).